Here is a 414-residue protein sequence, read N- to C-terminus: Na(+)-translocating NADH-quinone reductase subunit B (414 aa).

The next 4 membrane-spanning stretches (helical) occupy residues 56-76 (IMIM…YNVG), 82-104 (ALNH…HYWL), 129-149 (FLPI…LFCM), and 164-184 (ILFA…LGIT). Threonine 236 is modified (FMN phosphoryl threonine). 5 consecutive transmembrane segments (helical) span residues 275 to 295 (VSTL…IASW), 297 to 317 (IIAG…VIGS), 325 to 345 (MPWH…FMAT), 358 to 378 (WAYG…NPAY), and 381 to 401 (GMML…HIVI).

Belongs to the NqrB/RnfD family. Composed of six subunits; NqrA, NqrB, NqrC, NqrD, NqrE and NqrF. Requires FMN as cofactor.

The protein resides in the cell inner membrane. It carries out the reaction a ubiquinone + n Na(+)(in) + NADH + H(+) = a ubiquinol + n Na(+)(out) + NAD(+). In terms of biological role, NQR complex catalyzes the reduction of ubiquinone-1 to ubiquinol by two successive reactions, coupled with the transport of Na(+) ions from the cytoplasm to the periplasm. NqrA to NqrE are probably involved in the second step, the conversion of ubisemiquinone to ubiquinol. This Vibrio anguillarum (Listonella anguillarum) protein is Na(+)-translocating NADH-quinone reductase subunit B.